Consider the following 478-residue polypeptide: Growth/differentiation factor 10 (478 aa).

A signal peptide spans 1–33 (MARGPARTSLGPGSQQLPLLSLLLLLLLRDADG). The interval 34–70 (SHTAAARPPPPAAADGLAGDKNPQRSPGDVAAAQSPG) is disordered. Positions 34–368 (SHTAAARPPP…EKTMQKARKK (335 aa)) are excised as a propeptide. N-linked (GlcNAc...) asparagine glycosylation is found at Asn-118, Asn-155, and Asn-280. A disordered region spans residues 267–345 (PFQAGDPEPG…GRKDRRKKGQ (79 aa)). Residues 291–301 (TQATGPLQNNE) are compositionally biased toward polar residues. Residues 331–343 (LKPRPGRKDRRKK) show a composition bias toward basic residues. Cystine bridges form between Cys-376-Cys-443, Cys-405-Cys-475, and Cys-409-Cys-477. Asn-469 carries an N-linked (GlcNAc...) asparagine glycan.

It belongs to the TGF-beta family. In terms of assembly, homodimer or heterodimer. Can form a non-covalent complex of the mature region and the pro-region.

The protein localises to the secreted. Functionally, growth factor involved in osteogenesis and adipogenesis. Plays an inhibitory role in the process of osteoblast differentiation via SMAD2/3 pathway. Plays an inhibitory role in the process of adipogenesis. This is Growth/differentiation factor 10 (GDF10) from Bos taurus (Bovine).